The chain runs to 859 residues: Cadherin-related family member 1 (859 aa).

Residues 1 to 21 (MRRGPQVALVLGLLCIYLAQA) form the signal peptide. The Extracellular segment spans residues 22–701 (NFAPHFFDNG…LIQTKDNPMK (680 aa)). 6 Cadherin domains span residues 36-135 (NGNM…APRF), 136-247 (LQEP…APIF), 248-354 (VGTP…PPTF), 360-473 (PQNK…VPKF), 474-577 (TSHY…YPQF), and 569-691 (DVND…MAAF). N-linked (GlcNAc...) asparagine glycosylation is found at N58 and N89. N-linked (GlcNAc...) asparagine glycosylation is found at N288 and N297. Residues 702–722 (AVGVLAGVMAIVVAITVLIST) form a helical membrane-spanning segment. Topologically, residues 723–859 (ATFWRNKKSN…KKSLGNKAYV (137 aa)) are cytoplasmic. The disordered stretch occupies residues 789–859 (PPRAPALPPP…KKSLGNKAYV (71 aa)). Pro residues predominate over residues 790–800 (PRAPALPPPPK). A compositionally biased stretch (polar residues) spans 802–816 (ASSTVAQQTVPTVSG). Residues 817–827 (SLTPQPSQQLP) show a composition bias toward low complexity.

Interacts with PROM1. Undergoes proteolytic cleavage; produces a soluble 95 kDa N-terminal fragment and a 25 kDa cell-associated C-terminal fragment. Expressed in the retina. Strongly expressed by the mitral and tufted cells in the main and accessory olfactory bulbs. Also expressed in the septum and olfactory cortex. Weakly expressed in the triangular septal nucleus and piriform cortex.

The protein localises to the cell membrane. Functionally, potential calcium-dependent cell-adhesion protein. May be required for the structural integrity of the outer segment (OS) of photoreceptor cells. In Rattus norvegicus (Rat), this protein is Cadherin-related family member 1 (Cdhr1).